We begin with the raw amino-acid sequence, 567 residues long: Septation ring formation regulator EzrA (567 aa).

Residues 1–2 lie on the Extracellular side of the membrane; that stretch reads ME. A helical membrane pass occupies residues 3–21; the sequence is FIIGLIVILLALFSVGYFL. At 22–567 the chain is on the cytoplasmic side; sequence RKNIYKEIDR…AQQEKEYQHQ (546 aa). Coiled coils occupy residues 108–185, 243–375, and 402–529; these read IEDL…YEEE, KGYK…RDHV, and KGHL…ERRF.

The protein belongs to the EzrA family.

It localises to the cell membrane. Negative regulator of FtsZ ring formation; modulates the frequency and position of FtsZ ring formation. Inhibits FtsZ ring formation at polar sites. Interacts either with FtsZ or with one of its binding partners to promote depolymerization. The protein is Septation ring formation regulator EzrA of Bacillus pumilus (strain SAFR-032).